We begin with the raw amino-acid sequence, 540 residues long: Phosphoenolpyruvate carboxykinase (ATP) (540 aa).

Residue arginine 65 participates in substrate binding. N6-acetyllysine is present on lysine 87. Tyrosine 207 and lysine 213 together coordinate substrate. ATP contacts are provided by residues lysine 213, histidine 232, and 248-256; that span reads GLSGTGKTT. 2 residues coordinate Mn(2+): lysine 213 and histidine 232. Aspartate 269 is a binding site for Mn(2+). Residues glutamate 297, arginine 333, 449–450, and threonine 455 each bind ATP; that span reads RI. Substrate is bound at residue arginine 333. An N6-acetyllysine modification is found at lysine 523.

Belongs to the phosphoenolpyruvate carboxykinase (ATP) family. Monomer. It depends on Mn(2+) as a cofactor.

It is found in the cytoplasm. The enzyme catalyses oxaloacetate + ATP = phosphoenolpyruvate + ADP + CO2. Its pathway is carbohydrate biosynthesis; gluconeogenesis. Involved in the gluconeogenesis. Catalyzes the conversion of oxaloacetate (OAA) to phosphoenolpyruvate (PEP) through direct phosphoryl transfer between the nucleoside triphosphate and OAA. This is Phosphoenolpyruvate carboxykinase (ATP) from Escherichia coli O45:K1 (strain S88 / ExPEC).